Consider the following 606-residue polypeptide: Granule-bound starch synthase 1, chloroplastic/amyloplastic (606 aa).

The transit peptide at 1-76 directs the protein to the chloroplast; the sequence is MSALTTSQLA…GSRRFPSVVV (76 aa). Residues 29-67 are disordered; that stretch reads RHGFQGLKPRSPAGGDASSLSVTTSARATPKQQRSVQRG. Residues 46–66 are compositionally biased toward polar residues; the sequence is SSLSVTTSARATPKQQRSVQR. Lysine 97 is an ADP-alpha-D-glucose binding site.

It belongs to the glycosyltransferase 1 family. Bacterial/plant glycogen synthase subfamily.

The protein resides in the plastid. It localises to the chloroplast. The protein localises to the amyloplast. The enzyme catalyses an NDP-alpha-D-glucose + [(1-&gt;4)-alpha-D-glucosyl](n) = [(1-&gt;4)-alpha-D-glucosyl](n+1) + a ribonucleoside 5'-diphosphate + H(+). The protein operates within glycan biosynthesis; starch biosynthesis. In terms of biological role, required for the synthesis of amylose in endosperm. This Oryza sativa (Rice) protein is Granule-bound starch synthase 1, chloroplastic/amyloplastic (WAXY).